The chain runs to 424 residues: GTPase Obg (424 aa).

An Obg domain is found at 1-158 (MFVDRAEVFV…RYISLELKIL (158 aa)). A disordered region spans residues 21–42 (SFRREKYVPRGGPDGGDGGKGG). A compositionally biased stretch (gly residues) spans 32-42 (GPDGGDGGKGG). The OBG-type G domain maps to 159–331 (ADVGLLGFPN…LMKEAAAMLT (173 aa)). GTP is bound by residues 165-172 (GFPNVGKS), 190-194 (FTTLS), 212-215 (DIPG), 282-285 (NKAD), and 312-314 (SAA). 2 residues coordinate Mg(2+): S172 and T192. Positions 345-424 (KFIPEEKRFT…LNDFEFDYIL (80 aa)) constitute an OCT domain.

This sequence belongs to the TRAFAC class OBG-HflX-like GTPase superfamily. OBG GTPase family. As to quaternary structure, monomer. The cofactor is Mg(2+).

The protein resides in the cytoplasm. An essential GTPase which binds GTP, GDP and possibly (p)ppGpp with moderate affinity, with high nucleotide exchange rates and a fairly low GTP hydrolysis rate. Plays a role in control of the cell cycle, stress response, ribosome biogenesis and in those bacteria that undergo differentiation, in morphogenesis control. The sequence is that of GTPase Obg from Clostridium kluyveri (strain NBRC 12016).